We begin with the raw amino-acid sequence, 348 residues long: Phenylalanine--tRNA ligase alpha subunit (348 aa).

Residue Glu-262 participates in Mg(2+) binding.

Belongs to the class-II aminoacyl-tRNA synthetase family. Phe-tRNA synthetase alpha subunit type 1 subfamily. As to quaternary structure, tetramer of two alpha and two beta subunits. Mg(2+) is required as a cofactor.

The protein resides in the cytoplasm. The catalysed reaction is tRNA(Phe) + L-phenylalanine + ATP = L-phenylalanyl-tRNA(Phe) + AMP + diphosphate + H(+). The polypeptide is Phenylalanine--tRNA ligase alpha subunit (Streptococcus pneumoniae serotype 2 (strain D39 / NCTC 7466)).